Here is a 384-residue protein sequence, read N- to C-terminus: Ceramide synthase 6 (384 aa).

Residues 1-34 are Lumenal-facing; sequence MAGILAWFWNERFWLPHNVTWADLKNTEEATFPQ. An N-linked (GlcNAc...) asparagine glycan is attached at asparagine 18. The helical transmembrane segment at 35–55 threads the bilayer; that stretch reads AEDLYLAFPLAFCIFMVRLIF. Positions 66 to 127 are homeobox-like; it reads ALNIQANGPQ…RQRRNQEKPS (62 aa). One can recognise a TLC domain in the interval 130-331; that stretch reads TRFCESMWRF…IVKIACKTVS (202 aa). The next 4 membrane-spanning stretches (helical) occupy residues 174-194, 205-225, 263-283, and 303-323; these read LTAD…SLMV, FGIM…SYVN, LFVM…PLWV, and VFNL…YLIV. The Cytoplasmic segment spans residues 324–384; sequence KIACKTVSKG…LLTGPCSVDD (61 aa). A disordered region spans residues 335–384; sequence VSKDDRSDIESSSDDEDSEPPGKKPHSSTTTNGTSGTNGYLLTGPCSVDD. Positions 361-373 are enriched in low complexity; it reads SSTTTNGTSGTNG.

N-glycosylated. Glycosylation on Asn-18 is not necessary for function. In terms of processing, acetylated. Deacetylation by SIRT3 increases enzyme activity and promotes mitochondrial ceramide accumulation. Post-translationally, phosphorylated at the C-terminus by CK2. As to expression, broadly expressed, with highest levels in kidney and brain (at protein level).

It is found in the endoplasmic reticulum membrane. It catalyses the reaction a sphingoid base + hexadecanoyl-CoA = an N-hexadecanoyl-sphingoid base + CoA + H(+). The enzyme catalyses sphinganine + hexadecanoyl-CoA = N-hexadecanoylsphinganine + CoA + H(+). It carries out the reaction hexadecasphinganine + hexadecanoyl-CoA = N-hexadecanoylhexadecasphinganine + CoA + H(+). The catalysed reaction is sphing-4-enine + hexadecanoyl-CoA = N-hexadecanoylsphing-4-enine + CoA + H(+). It catalyses the reaction sphinganine + tetradecanoyl-CoA = N-(tetradecanoyl)-sphinganine + CoA + H(+). The enzyme catalyses sphinganine + octadecanoyl-CoA = N-(octadecanoyl)-sphinganine + CoA + H(+). Its pathway is lipid metabolism; sphingolipid metabolism. Ceramide synthase that catalyzes the transfer of the acyl chain from acyl-CoA to a sphingoid base, with high selectivity toward palmitoyl-CoA (hexadecanoyl-CoA; C16:0-CoA). Can use other acyl donors, but with less efficiency. N-acylates sphinganine and sphingosine bases to form dihydroceramides and ceramides in de novo synthesis and salvage pathways, respectively. Ceramides generated by CERS6 play a role in inflammatory response. Acts as a regulator of metabolism and hepatic lipid accumulation. Under high fat diet, palmitoyl- (C16:0-) ceramides generated by CERS6 specifically bind the mitochondrial fission factor MFF, thereby promoting mitochondrial fragmentation and contributing to the development of obesity. The protein is Ceramide synthase 6 of Mus musculus (Mouse).